The following is a 247-amino-acid chain: Carboxy-S-adenosyl-L-methionine synthase (247 aa).

S-adenosyl-L-methionine contacts are provided by residues tyrosine 39, 64–66 (GCS), 89–90 (DN), 117–118 (DI), asparagine 132, and arginine 199.

Belongs to the class I-like SAM-binding methyltransferase superfamily. Cx-SAM synthase family. In terms of assembly, homodimer.

The enzyme catalyses prephenate + S-adenosyl-L-methionine = carboxy-S-adenosyl-L-methionine + 3-phenylpyruvate + H2O. In terms of biological role, catalyzes the conversion of S-adenosyl-L-methionine (SAM) to carboxy-S-adenosyl-L-methionine (Cx-SAM). In Salmonella agona (strain SL483), this protein is Carboxy-S-adenosyl-L-methionine synthase.